Reading from the N-terminus, the 296-residue chain is AUGMIN subunit 2 (296 aa).

2 coiled-coil regions span residues 56 to 83 and 253 to 285; these read DDLI…QGRK and AVHK…NRRL. The interval 218 to 296 is disordered; that stretch reads AVSLPTTPGG…WPPSVKKSSV (79 aa). Over residues 264–277 the composition is skewed to acidic residues; the sequence is QNEEEEEEEEEEDG.

The protein belongs to the HAUS2 family. In terms of assembly, part of the augmin complex composed of 8 subunits. The complex acts on microtubules and interacts with gamma-tubulin in spindles and the phragmoplast.

Contributes to the assembly of the acentrosomal spindle and phragmoplast microtubule arrays as part of the augmin complex. The protein is AUGMIN subunit 2 of Arabidopsis thaliana (Mouse-ear cress).